The sequence spans 280 residues: UPF0273 protein SSO1861 (280 aa).

In terms of domain architecture, KaiC spans 2-246; sequence KRVKTYIPGL…YLKISNWSVS (245 aa). 29–36 is an ATP binding site; it reads GGPGTGKS.

Belongs to the UPF0273 family.

In Saccharolobus solfataricus (strain ATCC 35092 / DSM 1617 / JCM 11322 / P2) (Sulfolobus solfataricus), this protein is UPF0273 protein SSO1861.